A 38-amino-acid polypeptide reads, in one-letter code: Cytochrome b6-f complex subunit 5 (38 aa).

Residues 5 to 25 form a helical membrane-spanning segment; the sequence is LVLGIVLGLIPITLAGLFVAA.

This sequence belongs to the PetG family. In terms of assembly, the 4 large subunits of the cytochrome b6-f complex are cytochrome b6, subunit IV (17 kDa polypeptide, PetD), cytochrome f and the Rieske protein, while the 4 small subunits are PetG, PetL, PetM and PetN. The complex functions as a dimer.

The protein localises to the cellular thylakoid membrane. Functionally, component of the cytochrome b6-f complex, which mediates electron transfer between photosystem II (PSII) and photosystem I (PSI), cyclic electron flow around PSI, and state transitions. PetG is required for either the stability or assembly of the cytochrome b6-f complex. This chain is Cytochrome b6-f complex subunit 5, found in Microcystis aeruginosa (strain NIES-843 / IAM M-2473).